The primary structure comprises 240 residues: Pyridoxine 5'-phosphate synthase (240 aa).

Position 6 (Asn6) interacts with 3-amino-2-oxopropyl phosphate. 8 to 9 (DH) is a 1-deoxy-D-xylulose 5-phosphate binding site. 3-amino-2-oxopropyl phosphate is bound at residue Arg17. His42 (proton acceptor) is an active-site residue. 1-deoxy-D-xylulose 5-phosphate is bound by residues Arg44 and His49. The active-site Proton acceptor is Glu69. Thr99 lines the 1-deoxy-D-xylulose 5-phosphate pocket. The active-site Proton donor is the His193. Residues Gly194 and 216 to 217 (GH) contribute to the 3-amino-2-oxopropyl phosphate site.

The protein belongs to the PNP synthase family. In terms of assembly, homooctamer; tetramer of dimers.

It localises to the cytoplasm. It carries out the reaction 3-amino-2-oxopropyl phosphate + 1-deoxy-D-xylulose 5-phosphate = pyridoxine 5'-phosphate + phosphate + 2 H2O + H(+). The protein operates within cofactor biosynthesis; pyridoxine 5'-phosphate biosynthesis; pyridoxine 5'-phosphate from D-erythrose 4-phosphate: step 5/5. Catalyzes the complicated ring closure reaction between the two acyclic compounds 1-deoxy-D-xylulose-5-phosphate (DXP) and 3-amino-2-oxopropyl phosphate (1-amino-acetone-3-phosphate or AAP) to form pyridoxine 5'-phosphate (PNP) and inorganic phosphate. In Hydrogenobaculum sp. (strain Y04AAS1), this protein is Pyridoxine 5'-phosphate synthase.